The chain runs to 286 residues: NADPH-dependent 7-cyano-7-deazaguanine reductase (286 aa).

Position 88–90 (Val88–Ser90) interacts with substrate. Ser90–Lys91 provides a ligand contact to NADPH. Cys194 serves as the catalytic Thioimide intermediate. The Proton donor role is filled by Asp201. His233–Glu234 is a binding site for substrate. Arg262–Gly263 is a binding site for NADPH.

Belongs to the GTP cyclohydrolase I family. QueF type 2 subfamily. In terms of assembly, homodimer.

Its subcellular location is the cytoplasm. The enzyme catalyses 7-aminomethyl-7-carbaguanine + 2 NADP(+) = 7-cyano-7-deazaguanine + 2 NADPH + 3 H(+). It participates in tRNA modification; tRNA-queuosine biosynthesis. Functionally, catalyzes the NADPH-dependent reduction of 7-cyano-7-deazaguanine (preQ0) to 7-aminomethyl-7-deazaguanine (preQ1). The sequence is that of NADPH-dependent 7-cyano-7-deazaguanine reductase from Colwellia psychrerythraea (strain 34H / ATCC BAA-681) (Vibrio psychroerythus).